A 215-amino-acid chain; its full sequence is Ribonuclease HII (215 aa).

An RNase H type-2 domain is found at 19 to 213; sequence QTVAGVDEVG…SLRQPSQQID (195 aa). Residues Asp-25, Glu-26, and Asp-121 each coordinate a divalent metal cation.

The protein belongs to the RNase HII family. The cofactor is Mn(2+). Mg(2+) is required as a cofactor.

Its subcellular location is the cytoplasm. The catalysed reaction is Endonucleolytic cleavage to 5'-phosphomonoester.. Its function is as follows. Endonuclease that specifically degrades the RNA of RNA-DNA hybrids. This is Ribonuclease HII from Synechococcus elongatus (strain ATCC 33912 / PCC 7942 / FACHB-805) (Anacystis nidulans R2).